Reading from the N-terminus, the 329-residue chain is Cytochrome f (329 aa).

The N-terminal stretch at 1 to 44 (MKRNIIFLVIHQFENLTMKKKQNIFFIFLLTVFFNFTVNSNVSA) is a signal peptide. Residues Tyr-45, Cys-65, Cys-68, and His-69 each contribute to the heme site. The chain crosses the membrane as a helical span at residues 295–315 (VQGLIIFLITIFITQLFLVLK).

Belongs to the cytochrome f family. As to quaternary structure, the 4 large subunits of the cytochrome b6-f complex are cytochrome b6, subunit IV (17 kDa polypeptide, petD), cytochrome f and the Rieske protein, while the 4 small subunits are PetG, PetL, PetM and PetN. The complex functions as a dimer. The cofactor is heme.

It localises to the plastid. The protein resides in the chloroplast thylakoid membrane. Component of the cytochrome b6-f complex, which mediates electron transfer between photosystem II (PSII) and photosystem I (PSI), cyclic electron flow around PSI, and state transitions. This Tupiella akineta (Green alga) protein is Cytochrome f.